The chain runs to 277 residues: Formamidopyrimidine-DNA glycosylase (277 aa).

P2 functions as the Schiff-base intermediate with DNA in the catalytic mechanism. The Proton donor role is filled by E3. The active-site Proton donor; for beta-elimination activity is the K60. DNA contacts are provided by H94, R113, and R156. The segment at 241 to 275 (KVYNREGLPCPHCGKPIQRIKVAGRSSYYCSSCQK) adopts an FPG-type zinc-finger fold. Residue R265 is the Proton donor; for delta-elimination activity of the active site.

This sequence belongs to the FPG family. Monomer. It depends on Zn(2+) as a cofactor.

It carries out the reaction Hydrolysis of DNA containing ring-opened 7-methylguanine residues, releasing 2,6-diamino-4-hydroxy-5-(N-methyl)formamidopyrimidine.. The catalysed reaction is 2'-deoxyribonucleotide-(2'-deoxyribose 5'-phosphate)-2'-deoxyribonucleotide-DNA = a 3'-end 2'-deoxyribonucleotide-(2,3-dehydro-2,3-deoxyribose 5'-phosphate)-DNA + a 5'-end 5'-phospho-2'-deoxyribonucleoside-DNA + H(+). Involved in base excision repair of DNA damaged by oxidation or by mutagenic agents. Acts as a DNA glycosylase that recognizes and removes damaged bases. Has a preference for oxidized purines, such as 7,8-dihydro-8-oxoguanine (8-oxoG). Has AP (apurinic/apyrimidinic) lyase activity and introduces nicks in the DNA strand. Cleaves the DNA backbone by beta-delta elimination to generate a single-strand break at the site of the removed base with both 3'- and 5'-phosphates. In Desulforamulus reducens (strain ATCC BAA-1160 / DSM 100696 / MI-1) (Desulfotomaculum reducens), this protein is Formamidopyrimidine-DNA glycosylase.